Reading from the N-terminus, the 615-residue chain is Aldehyde oxidase GLOX1 (615 aa).

A signal peptide spans 1–25 (MKKSTRLLWLLSIIVLVAAVSKAVA). An N-linked (GlcNAc...) asparagine glycan is attached at Asn35. The disordered stretch occupies residues 70-89 (PPKAGKGKGKGKGRGTVAAG). Basic residues predominate over residues 72-82 (KAGKGKGKGKG). Residues Asn187 and Asn297 are each glycosylated (N-linked (GlcNAc...) asparagine).

Its subcellular location is the secreted. It catalyses the reaction an aldehyde + O2 + H2O = a carboxylate + H2O2 + H(+). Functionally, catalyzes the oxidation of aldehydes to the corresponding carboxylate by coupling the reaction to the reduction of dioxygen to hydrogen peroxide. Substrates include glyoxal and other aldehydes. May be regulated by the transcription factor MYB80 during anther development and play a role in tapetum and pollen development. The protein is Aldehyde oxidase GLOX1 of Arabidopsis thaliana (Mouse-ear cress).